A 333-amino-acid polypeptide reads, in one-letter code: Delta-aminolevulinic acid dehydratase (333 aa).

Zn(2+)-binding residues include Cys-127, Cys-129, and Cys-137. Lys-204 serves as the catalytic Schiff-base intermediate with substrate. 5-aminolevulinate is bound by residues Arg-214 and Arg-226. The active-site Schiff-base intermediate with substrate is the Lys-257. 5-aminolevulinate contacts are provided by Ser-283 and Tyr-322.

It belongs to the ALAD family. As to quaternary structure, homooctamer. Zn(2+) is required as a cofactor.

The catalysed reaction is 2 5-aminolevulinate = porphobilinogen + 2 H2O + H(+). It participates in porphyrin-containing compound metabolism; protoporphyrin-IX biosynthesis; coproporphyrinogen-III from 5-aminolevulinate: step 1/4. Functionally, catalyzes an early step in the biosynthesis of tetrapyrroles. Binds two molecules of 5-aminolevulinate per subunit, each at a distinct site, and catalyzes their condensation to form porphobilinogen. This Dictyostelium discoideum (Social amoeba) protein is Delta-aminolevulinic acid dehydratase (alad).